The following is a 278-amino-acid chain: Orotidine 5'-phosphate decarboxylase (278 aa).

Substrate is bound by residues Asp-40, 65-67, 96-105, Tyr-230, and Arg-248; these read KTH and DRKFIDIGNT. Lys-98 (proton donor) is an active-site residue.

This sequence belongs to the OMP decarboxylase family.

The enzyme catalyses orotidine 5'-phosphate + H(+) = UMP + CO2. It functions in the pathway pyrimidine metabolism; UMP biosynthesis via de novo pathway; UMP from orotate: step 2/2. The sequence is that of Orotidine 5'-phosphate decarboxylase (pyrG) from Penicillium chrysogenum (Penicillium notatum).